The primary structure comprises 396 residues: Alpha-galactosidase 2 (396 aa).

Positions Met-1–Gly-25 are cleaved as a signal peptide. 2 disulfides stabilise this stretch: Cys-52-Cys-84 and Cys-132-Cys-163. N-linked (GlcNAc...) asparagine glycosylation occurs at Asn-55. Residues Asp-82–Asp-83 and Lys-159 each bind substrate. Asp-161 (nucleophile) is an active-site residue. Residues Glu-194–Glu-198, Arg-212, and Asp-216 each bind substrate. Asp-216 acts as the Proton donor in catalysis. 2 N-linked (GlcNAc...) asparagine glycosylation sites follow: Asn-343 and Asn-354.

This sequence belongs to the glycosyl hydrolase 27 family. As to quaternary structure, homodimer.

It is found in the secreted. Its subcellular location is the cell wall. It localises to the extracellular space. The protein localises to the apoplast. The enzyme catalyses Hydrolysis of terminal, non-reducing alpha-D-galactose residues in alpha-D-galactosides, including galactose oligosaccharides, galactomannans and galactolipids.. May regulate leaf (and possibly other organ) development by functioning in cell wall loosening and cell wall expansion. The chain is Alpha-galactosidase 2 from Arabidopsis thaliana (Mouse-ear cress).